Here is a 281-residue protein sequence, read N- to C-terminus: 2,3,4,5-tetrahydropyridine-2,6-dicarboxylate N-succinyltransferase (281 aa).

The substrate site is built by Arg-108 and Asp-145.

This sequence belongs to the transferase hexapeptide repeat family. In terms of assembly, homotrimer.

The protein resides in the cytoplasm. The catalysed reaction is (S)-2,3,4,5-tetrahydrodipicolinate + succinyl-CoA + H2O = (S)-2-succinylamino-6-oxoheptanedioate + CoA. It participates in amino-acid biosynthesis; L-lysine biosynthesis via DAP pathway; LL-2,6-diaminopimelate from (S)-tetrahydrodipicolinate (succinylase route): step 1/3. The sequence is that of 2,3,4,5-tetrahydropyridine-2,6-dicarboxylate N-succinyltransferase from Methylobacterium nodulans (strain LMG 21967 / CNCM I-2342 / ORS 2060).